Reading from the N-terminus, the 410-residue chain is Lysosome-associated membrane glycoprotein 2 (410 aa).

Residues 1–28 (MVCFRLFPVPGSGLVLVCLVLGAVRSYA) form the signal peptide. The interval 29-192 (LELNLTDSEN…STNEFLCDKD (164 aa)) is first lumenal domain. Over 29–375 (LELNLTDSEN…QDCSADDDNF (347 aa)) the chain is Lumenal. 2 N-linked (GlcNAc...) (polylactosaminoglycan) asparagine glycosylation sites follow: N32 and N38. The cysteines at positions 41 and 79 are disulfide-linked. N-linked (GlcNAc...) asparagine glycans are attached at residues N49, N58, N75, N101, N123, and N179. C153 and C189 are joined by a disulfide. Residues 193–228 (KTSTVAPTIHTTVPSPTTTPTPKEKPEAGTYSVNNG) are hinge. O-linked (GalNAc...) serine glycosylation occurs at S195. Residues T196, T200, T203, and T204 are each glycosylated (O-linked (GalNAc...) threonine). Low complexity predominate over residues 199–213 (PTIHTTVPSPTTTPT). Residues 199 to 221 (PTIHTTVPSPTTTPTPKEKPEAG) are disordered. The O-linked (GalNAc...) serine; partial glycan is linked to S207. O-linked (GalNAc...) threonine; partial glycosylation occurs at T209. O-linked (GalNAc...) threonine glycans are attached at residues T210 and T211. The O-linked (GalNAc...) threonine; partial glycan is linked to T213. Residues N229, N242, N257, N275, and N300 are each glycosylated (N-linked (GlcNAc...) asparagine). Residues 229-375 (NDTCLLATMG…QDCSADDDNF (147 aa)) form a second lumenal domain region. A disulfide bridge connects residues C232 and C265. A glycan (N-linked (GlcNAc...) (polylactosaminoglycan) asparagine) is linked at N307. N317 and N356 each carry an N-linked (GlcNAc...) asparagine glycan. A disulfide bond links C331 and C368. The helical transmembrane segment at 376–399 (LVPIAVGAALAGVLILVLLAYFIG) threads the bilayer. Topologically, residues 400–410 (LKHHHAGYEQF) are cytoplasmic. An important for binding and subsequent lysosomal degradation of target proteins region spans residues 401–404 (KHHH).

Belongs to the LAMP family. In terms of assembly, monomer. Homodimer. Homotrimer. Forms large homooligomers. Interacts (via its cytoplasmic region) with HSPA8; HSPA8 mediates recruitment of proteins with a KFERQ motif to the surface of the lysosome for chaperone-mediated autophagy. Interacts with HSP90 in the lysosome lumen; this enhances LAMP2 stability. Interacts with MLLT11. Interacts with ABCB9. Interacts with FURIN. Interacts with CT55; this interaction may be important for LAMP2 protein stability. Interacts with TMEM175; inhibiting the proton channel activity of TMEM175. Forms a ternary complex with RAB7A and RUFY4 (via RUN domain); the interaction with RAB7A is mediated by RUFY4 (via RUN and coiled coil domains). (Microbial infection) Interacts with mumps virus protein F; this interaction promotes protein F cleavage by FURIN. Post-translationally, O- and N-glycosylated; some of the 16 N-linked glycans are polylactosaminoglycans. In terms of tissue distribution, isoform LAMP-2A is highly expressed in placenta, lung and liver, less in kidney and pancreas, low in brain and skeletal muscle. Isoform LAMP-2B is detected in spleen, thymus, prostate, testis, small intestine, colon, skeletal muscle, brain, placenta, lung, kidney, ovary and pancreas and liver. Isoform LAMP-2C is detected in small intestine, colon, heart, brain, skeletal muscle, and at lower levels in kidney and placenta.

The protein resides in the lysosome membrane. It is found in the endosome membrane. The protein localises to the cell membrane. It localises to the cytoplasmic vesicle. Its subcellular location is the autophagosome membrane. Functionally, lysosomal membrane glycoprotein which plays an important role in lysosome biogenesis, lysosomal pH regulation and autophagy. Acts as an important regulator of lysosomal lumen pH regulation by acting as a direct inhibitor of the proton channel TMEM175, facilitating lysosomal acidification for optimal hydrolase activity. Plays an important role in chaperone-mediated autophagy, a process that mediates lysosomal degradation of proteins in response to various stresses and as part of the normal turnover of proteins with a long biological half-live. Functions by binding target proteins, such as GAPDH, NLRP3 and MLLT11, and targeting them for lysosomal degradation. In the chaperone-mediated autophagy, acts downstream of chaperones, such as HSPA8/HSC70, which recognize and bind substrate proteins and mediate their recruitment to lysosomes, where target proteins bind LAMP2. Plays a role in lysosomal protein degradation in response to starvation. Required for the fusion of autophagosomes with lysosomes during autophagy. Cells that lack LAMP2 express normal levels of VAMP8, but fail to accumulate STX17 on autophagosomes, which is the most likely explanation for the lack of fusion between autophagosomes and lysosomes. Required for normal degradation of the contents of autophagosomes. Required for efficient MHC class II-mediated presentation of exogenous antigens via its function in lysosomal protein degradation; antigenic peptides generated by proteases in the endosomal/lysosomal compartment are captured by nascent MHC II subunits. Is not required for efficient MHC class II-mediated presentation of endogenous antigens. Its function is as follows. Modulates chaperone-mediated autophagy. Decreases presentation of endogenous antigens by MHCII. Does not play a role in the presentation of exogenous and membrane-derived antigens by MHCII. In terms of biological role, (Microbial infection) Supports the FURIN-mediated cleavage of mumps virus fusion protein F by interacting with both FURIN and the unprocessed form but not the processed form of the viral protein F. The polypeptide is Lysosome-associated membrane glycoprotein 2 (LAMP2) (Homo sapiens (Human)).